A 212-amino-acid polypeptide reads, in one-letter code: ATP-dependent dethiobiotin synthetase BioD (212 aa).

Residue 13–18 (GIGKTV) coordinates ATP. Threonine 17 is a binding site for Mg(2+). The active site involves lysine 33. Residue serine 37 coordinates substrate. Glutamate 100 is a binding site for Mg(2+). ATP-binding positions include 100 to 103 (EGAG), 160 to 161 (IS), and 184 to 186 (PLL).

It belongs to the dethiobiotin synthetase family. Homodimer. Mg(2+) is required as a cofactor.

Its subcellular location is the cytoplasm. The enzyme catalyses (7R,8S)-7,8-diammoniononanoate + CO2 + ATP = (4R,5S)-dethiobiotin + ADP + phosphate + 3 H(+). The protein operates within cofactor biosynthesis; biotin biosynthesis; biotin from 7,8-diaminononanoate: step 1/2. Catalyzes a mechanistically unusual reaction, the ATP-dependent insertion of CO2 between the N7 and N8 nitrogen atoms of 7,8-diaminopelargonic acid (DAPA, also called 7,8-diammoniononanoate) to form a ureido ring. In Brucella abortus (strain S19), this protein is ATP-dependent dethiobiotin synthetase BioD.